A 360-amino-acid polypeptide reads, in one-letter code: Histidinol-phosphate aminotransferase (360 aa).

An N6-(pyridoxal phosphate)lysine modification is found at lysine 218.

It belongs to the class-II pyridoxal-phosphate-dependent aminotransferase family. Histidinol-phosphate aminotransferase subfamily. In terms of assembly, homodimer. Pyridoxal 5'-phosphate is required as a cofactor.

The enzyme catalyses L-histidinol phosphate + 2-oxoglutarate = 3-(imidazol-4-yl)-2-oxopropyl phosphate + L-glutamate. It participates in amino-acid biosynthesis; L-histidine biosynthesis; L-histidine from 5-phospho-alpha-D-ribose 1-diphosphate: step 7/9. This is Histidinol-phosphate aminotransferase from Pelagibacter ubique (strain HTCC1062).